Here is a 495-residue protein sequence, read N- to C-terminus: Maturase K (495 aa).

Belongs to the intron maturase 2 family. MatK subfamily.

It localises to the plastid. It is found in the chloroplast. Its function is as follows. Usually encoded in the trnK tRNA gene intron. Probably assists in splicing its own and other chloroplast group II introns. This chain is Maturase K, found in Torreya californica (California nutmeg).